A 367-amino-acid chain; its full sequence is Palmitoyltransferase ZDHHC2 (367 aa).

Residues 1–16 (MAPSGPGSSARRRCRR) lie on the Cytoplasmic side of the membrane. The chain crosses the membrane as a helical span at residues 17–37 (VLYWIPVVFITLLLGWSYYAY). Over 38-54 (AIQLCIVSMENTGEQVV) the chain is Lumenal. Residues 55–75 (CLMAYHLLFAMFVWSYWKTIF) traverse the membrane as a helical segment. Topologically, residues 76–170 (TLPMNPSKEF…NNCVGFSNYK (95 aa)) are cytoplasmic. The 51-residue stretch at 127–177 (RYCDRCQLIKPDRCHHCSVCDKCILKMDHHCPWVNNCVGFSNYKFFLLFLA) folds into the DHHC domain. The S-palmitoyl cysteine intermediate role is filled by Cys-157. The chain crosses the membrane as a helical span at residues 171-191 (FFLLFLAYSLLYCLFIAATDL). The Lumenal portion of the chain corresponds to 192–208 (QYFIKFWTNGLPDTQAK). The chain crosses the membrane as a helical span at residues 209–229 (FHIMFLFFAAAMFSVSLSSLF). Over 230 to 367 (GYHCWLVSKN…NPALTMENET (138 aa)) the chain is Cytoplasmic. Residues 299-367 (NQDPEQASTP…NPALTMENET (69 aa)) form a mediates localization to plasma membrane and recycling endosomes region. Residues 330 to 367 (ESQSHLLTDSQSWTESSINPGKCKAGMSNPALTMENET) form a disordered region. The segment covering 333-348 (SHLLTDSQSWTESSIN) has biased composition (polar residues). Positions 335 to 336 (LL) match the Non-canonical dileucine endocytic signal motif. Position 341 is a phosphoserine (Ser-341). The NPxY-like endocytic signal motif lies at 358 to 361 (NPAL).

Belongs to the DHHC palmitoyltransferase family. As to quaternary structure, monomer. Homodimer. The monomeric form has a higher catalytic activity. Autopalmitoylated. Ubiquitously expressed. Reduced expression in colorectal cancers with liver metastasis.

Its subcellular location is the postsynaptic density. The protein resides in the postsynaptic recycling endosome membrane. It localises to the cell membrane. It is found in the endoplasmic reticulum membrane. The protein localises to the golgi apparatus membrane. The enzyme catalyses L-cysteinyl-[protein] + hexadecanoyl-CoA = S-hexadecanoyl-L-cysteinyl-[protein] + CoA. The catalysed reaction is L-cysteinyl-[protein] + tetradecanoyl-CoA = S-tetradecanoyl-L-cysteinyl-[protein] + CoA. It catalyses the reaction L-cysteinyl-[protein] + octadecanoyl-CoA = S-octadecanoyl-L-cysteinyl-[protein] + CoA. Its function is as follows. Palmitoyltransferase that catalyzes the addition of palmitate onto various protein substrates and is involved in a variety of cellular processes. Has no stringent fatty acid selectivity and in addition to palmitate can also transfer onto target proteins myristate from tetradecanoyl-CoA and stearate from octadecanoyl-CoA. In the nervous system, plays a role in long term synaptic potentiation by palmitoylating AKAP5 through which it regulates protein trafficking from the dendritic recycling endosomes to the plasma membrane and controls both structural and functional plasticity at excitatory synapses. In dendrites, mediates the palmitoylation of DLG4 when synaptic activity decreases and induces synaptic clustering of DLG4 and associated AMPA-type glutamate receptors. Also mediates the de novo and turnover palmitoylation of RGS7BP, a shuttle for Gi/o-specific GTPase-activating proteins/GAPs, promoting its localization to the plasma membrane in response to the activation of G protein-coupled receptors. Through the localization of these GTPase-activating proteins/GAPs, it also probably plays a role in G protein-coupled receptors signaling in neurons. Also probably plays a role in cell adhesion by palmitoylating CD9 and CD151 to regulate their expression and function. Palmitoylates the endoplasmic reticulum protein CKAP4 and regulates its localization to the plasma membrane. Could also palmitoylate LCK and regulate its localization to the plasma membrane. In terms of biological role, (Microbial infection) Promotes Chikungunya virus (CHIKV) replication by mediating viral nsp1 palmitoylation. The polypeptide is Palmitoyltransferase ZDHHC2 (Homo sapiens (Human)).